A 685-amino-acid polypeptide reads, in one-letter code: Glycine--tRNA ligase beta subunit (685 aa).

Positions 58–77 are disordered; sequence GLTAQSPTTREERKGPRTDA. A compositionally biased stretch (basic and acidic residues) spans 66 to 77; that stretch reads TREERKGPRTDA.

Belongs to the class-II aminoacyl-tRNA synthetase family. Tetramer of two alpha and two beta subunits.

The protein resides in the cytoplasm. It catalyses the reaction tRNA(Gly) + glycine + ATP = glycyl-tRNA(Gly) + AMP + diphosphate. This chain is Glycine--tRNA ligase beta subunit, found in Paracoccus denitrificans (strain Pd 1222).